An 84-amino-acid chain; its full sequence is Subtilisin-chymotrypsin inhibitor-2A (84 aa).

Residues 1 to 23 are disordered; sequence MSSVEKKPEGVNTGAGDRHNLKT.

It belongs to the protease inhibitor I13 (potato type I serine protease inhibitor) family.

Inhibits both subtilisin and chymotrypsin. The polypeptide is Subtilisin-chymotrypsin inhibitor-2A (Hordeum vulgare (Barley)).